Reading from the N-terminus, the 469-residue chain is MDSPPGPTAPPGLTQGPSFMASTTLHSHWNSTQKVSTRAQLLAVSPTASGPEAAAWVPFPTVDVPDHAHYILGTVILLVGLTGMLGNLTVIYTFCRSRSLRTPANMLIINLAVSDFLMSFTQAPVFFASSLYKKWLFGETGCEFYAFCGAVLGITSMITLTAIALDRYLVITRPLATIGMGSKRRTALVLLGIWLYALAWSLPPFFGWSAYVPEGLLTSCSWDYVTFTPQVRAYTMLLFCFVFFLPLLVIIFCYISIFRAIRETGRACEGWSESPQRRRQWHRLQSEWKMAKVALIVILLFVLSWAPYSTVALVAFAGYSHILTPYMSSVPAVIAKASAIHNPIVYAITHPKYRAAIAQHLPCLGVLLGVSSQRNRPSLSYRSTHRSTLSSQSSDLSWISAPKRQESLGSESEVGWTDTEATAVWGAAQPASGQSSCGQNLEDGMVKAPSSPQAKGQLPSLDLGMQDAP.

The Extracellular segment spans residues 1–71; it reads MDSPPGPTAP…VDVPDHAHYI (71 aa). N-linked (GlcNAc...) asparagine glycosylation occurs at N30. Residues 72-92 traverse the membrane as a helical segment; the sequence is LGTVILLVGLTGMLGNLTVIY. Over 93–106 the chain is Cytoplasmic; it reads TFCRSRSLRTPANM. Residues 107 to 127 traverse the membrane as a helical segment; it reads LIINLAVSDFLMSFTQAPVFF. At 128 to 143 the chain is on the extracellular side; that stretch reads ASSLYKKWLFGETGCE. C142 and C220 form a disulfide bridge. The chain crosses the membrane as a helical span at residues 144–164; that stretch reads FYAFCGAVLGITSMITLTAIA. Residues 165-187 lie on the Cytoplasmic side of the membrane; it reads LDRYLVITRPLATIGMGSKRRTA. Residues 188-208 traverse the membrane as a helical segment; it reads LVLLGIWLYALAWSLPPFFGW. Topologically, residues 209-237 are extracellular; sequence SAYVPEGLLTSCSWDYVTFTPQVRAYTML. Residues 238-258 form a helical membrane-spanning segment; sequence LFCFVFFLPLLVIIFCYISIF. The Cytoplasmic portion of the chain corresponds to 259–295; the sequence is RAIRETGRACEGWSESPQRRRQWHRLQSEWKMAKVAL. Residues 296–316 form a helical membrane-spanning segment; the sequence is IVILLFVLSWAPYSTVALVAF. Over 317–328 the chain is Extracellular; the sequence is AGYSHILTPYMS. The chain crosses the membrane as a helical span at residues 329 to 349; it reads SVPAVIAKASAIHNPIVYAIT. K336 is modified (N6-(retinylidene)lysine). Over 350–469 the chain is Cytoplasmic; the sequence is HPKYRAAIAQ…SLDLGMQDAP (120 aa). Residues 409 to 469 are disordered; it reads GSESEVGWTD…SLDLGMQDAP (61 aa).

The protein belongs to the G-protein coupled receptor 1 family. Opsin subfamily.

It localises to the cell membrane. The protein resides in the cell projection. Its subcellular location is the axon. The protein localises to the dendrite. It is found in the perikaryon. Photoreceptor that binds cis-retinaldehydes. Contributes to pupillar reflex, photoentrainment and other non-image forming responses to light. May be involved in the optokinetic visual tracking response. May be involved in the regulation of retinal hyaloid vessel growth and regression. The polypeptide is Melanopsin (OPN4) (Phodopus sungorus (Striped hairy-footed hamster)).